Reading from the N-terminus, the 380-residue chain is Cytochrome b (380 aa).

The next 4 membrane-spanning stretches (helical) occupy residues 34-54 (FGSL…FLAM), 78-99 (WLLR…YFHI), 114-134 (WYTG…GYIL), and 179-199 (FFTL…IHLL). Heme b contacts are provided by H84 and H98. 2 residues coordinate heme b: H183 and H197. Residue H202 coordinates a ubiquinone. 4 consecutive transmembrane segments (helical) span residues 227 to 247 (YKDL…TLFL), 289 to 309 (LGGV…PTLH), 321 to 341 (FTQI…WIGA), and 348 to 368 (FIMI…LLIP).

This sequence belongs to the cytochrome b family. As to quaternary structure, the cytochrome bc1 complex contains 3 respiratory subunits (MT-CYB, CYC1 and UQCRFS1), 2 core proteins (UQCRC1 and UQCRC2) and probably 6 low-molecular weight proteins. Heme b serves as cofactor.

The protein localises to the mitochondrion inner membrane. Component of the ubiquinol-cytochrome c reductase complex (complex III or cytochrome b-c1 complex) that is part of the mitochondrial respiratory chain. The b-c1 complex mediates electron transfer from ubiquinol to cytochrome c. Contributes to the generation of a proton gradient across the mitochondrial membrane that is then used for ATP synthesis. The sequence is that of Cytochrome b (MT-CYB) from Pelomedusa subrufa (African side-necked turtle).